A 535-amino-acid chain; its full sequence is Light-independent protochlorophyllide reductase subunit B (535 aa).

Residue Asp-36 coordinates [4Fe-4S] cluster. The active-site Proton donor is the Asp-292. 428-429 (GL) serves as a coordination point for substrate. Residues 446-483 (DEASPSESAPHASNGHEDVAGGSTAQSVPSHAATEGDG) form a disordered region.

This sequence belongs to the ChlB/BchB/BchZ family. In terms of assembly, protochlorophyllide reductase is composed of three subunits; BchL, BchN and BchB. Forms a heterotetramer of two BchB and two BchN subunits. [4Fe-4S] cluster is required as a cofactor.

It catalyses the reaction chlorophyllide a + oxidized 2[4Fe-4S]-[ferredoxin] + 2 ADP + 2 phosphate = protochlorophyllide a + reduced 2[4Fe-4S]-[ferredoxin] + 2 ATP + 2 H2O. Its pathway is porphyrin-containing compound metabolism; bacteriochlorophyll biosynthesis (light-independent). Its function is as follows. Component of the dark-operative protochlorophyllide reductase (DPOR) that uses Mg-ATP and reduced ferredoxin to reduce ring D of protochlorophyllide (Pchlide) to form chlorophyllide a (Chlide). This reaction is light-independent. The NB-protein (BchN-BchB) is the catalytic component of the complex. The chain is Light-independent protochlorophyllide reductase subunit B from Chlorobium limicola (strain DSM 245 / NBRC 103803 / 6330).